The chain runs to 165 residues: Ribosomal RNA large subunit methyltransferase H (165 aa).

G109 serves as a coordination point for S-adenosyl-L-methionine.

Belongs to the RNA methyltransferase RlmH family. In terms of assembly, homodimer.

The protein localises to the cytoplasm. It catalyses the reaction pseudouridine(1915) in 23S rRNA + S-adenosyl-L-methionine = N(3)-methylpseudouridine(1915) in 23S rRNA + S-adenosyl-L-homocysteine + H(+). Its function is as follows. Specifically methylates the pseudouridine at position 1915 (m3Psi1915) in 23S rRNA. In Methylorubrum extorquens (strain CM4 / NCIMB 13688) (Methylobacterium extorquens), this protein is Ribosomal RNA large subunit methyltransferase H.